Consider the following 114-residue polypeptide: T cell receptor beta variable 6-9 (114 aa).

The first 21 residues, 1–21 (MSIGLLCCVAFSLLWAGPVNA), serve as a signal peptide directing secretion. Positions 22-114 (GVTQTPKFHI…TSVYFCASSY (93 aa)) constitute an Ig-like domain. An intrachain disulfide couples Cys42 to Cys110. A glycan (N-linked (GlcNAc...) asparagine) is linked at Asn84.

Alpha-beta TR is a heterodimer composed of an alpha and beta chain; disulfide-linked. The alpha-beta TR is associated with the transmembrane signaling CD3 coreceptor proteins to form the TR-CD3 (TcR or TCR). The assembly of alpha-beta TR heterodimers with CD3 occurs in the endoplasmic reticulum where a single alpha-beta TR heterodimer associates with one CD3D-CD3E heterodimer, one CD3G-CD3E heterodimer and one CD247 homodimer forming a stable octameric structure. CD3D-CD3E and CD3G-CD3E heterodimers preferentially associate with TR alpha and TR beta chains, respectively. The association of the CD247 homodimer is the last step of TcR assembly in the endoplasmic reticulum and is required for transport to the cell surface.

The protein resides in the cell membrane. Functionally, v region of the variable domain of T cell receptor (TR) beta chain that participates in the antigen recognition. Alpha-beta T cell receptors are antigen specific receptors which are essential to the immune response and are present on the cell surface of T lymphocytes. Recognize peptide-major histocompatibility (MH) (pMH) complexes that are displayed by antigen presenting cells (APC), a prerequisite for efficient T cell adaptive immunity against pathogens. Binding of alpha-beta TR to pMH complex initiates TR-CD3 clustering on the cell surface and intracellular activation of LCK that phosphorylates the ITAM motifs of CD3G, CD3D, CD3E and CD247 enabling the recruitment of ZAP70. In turn ZAP70 phosphorylates LAT, which recruits numerous signaling molecules to form the LAT signalosome. The LAT signalosome propagates signal branching to three major signaling pathways, the calcium, the mitogen-activated protein kinase (MAPK) kinase and the nuclear factor NF-kappa-B (NF-kB) pathways, leading to the mobilization of transcription factors that are critical for gene expression and essential for T cell growth and differentiation. The T cell repertoire is generated in the thymus, by V-(D)-J rearrangement. This repertoire is then shaped by intrathymic selection events to generate a peripheral T cell pool of self-MH restricted, non-autoaggressive T cells. Post-thymic interaction of alpha-beta TR with the pMH complexes shapes TR structural and functional avidity. This Homo sapiens (Human) protein is T cell receptor beta variable 6-9.